We begin with the raw amino-acid sequence, 171 residues long: S-ribosylhomocysteine lyase (171 aa).

The Fe cation site is built by H54, H58, and C128.

Belongs to the LuxS family. Homodimer. It depends on Fe cation as a cofactor.

The enzyme catalyses S-(5-deoxy-D-ribos-5-yl)-L-homocysteine = (S)-4,5-dihydroxypentane-2,3-dione + L-homocysteine. Functionally, involved in the synthesis of autoinducer 2 (AI-2) which is secreted by bacteria and is used to communicate both the cell density and the metabolic potential of the environment. The regulation of gene expression in response to changes in cell density is called quorum sensing. Catalyzes the transformation of S-ribosylhomocysteine (RHC) to homocysteine (HC) and 4,5-dihydroxy-2,3-pentadione (DPD). This is S-ribosylhomocysteine lyase from Salmonella typhi.